The chain runs to 300 residues: GTPase Era (300 aa).

The 168-residue stretch at 6–173 (KSGFVAIVGR…MDVLVEQMPE (168 aa)) folds into the Era-type G domain. The interval 14-21 (GRPNVGKS) is G1. Residue 14 to 21 (GRPNVGKS) coordinates GTP. Residues 40–44 (QTTRN) form a G2 region. Residues 61 to 64 (DTPG) form a G3 region. Residues 61-65 (DTPGI) and 123-126 (NKID) each bind GTP. A G4 region spans residues 123 to 126 (NKID). The tract at residues 152-154 (ISA) is G5. Residues 204 to 281 (TRDEIPHSVA…YLELWVKVQK (78 aa)) form the KH type-2 domain.

This sequence belongs to the TRAFAC class TrmE-Era-EngA-EngB-Septin-like GTPase superfamily. Era GTPase family. In terms of assembly, monomer.

The protein resides in the cytoplasm. It localises to the cell membrane. Its function is as follows. An essential GTPase that binds both GDP and GTP, with rapid nucleotide exchange. Plays a role in 16S rRNA processing and 30S ribosomal subunit biogenesis and possibly also in cell cycle regulation and energy metabolism. This is GTPase Era from Enterococcus faecalis (strain ATCC 700802 / V583).